The following is a 353-amino-acid chain: DNA-directed RNA polymerase subunit alpha (353 aa).

Residues 1–234 (MVREKVTVST…DLFIPFLHTE (234 aa)) form an alpha N-terminal domain (alpha-NTD) region. The alpha C-terminal domain (alpha-CTD) stretch occupies residues 267 to 353 (KRALKSIFID…LAQLIDSKSG (87 aa)).

It belongs to the RNA polymerase alpha chain family. As to quaternary structure, in plastids the minimal PEP RNA polymerase catalytic core is composed of four subunits: alpha, beta, beta', and beta''. When a (nuclear-encoded) sigma factor is associated with the core the holoenzyme is formed, which can initiate transcription.

The protein resides in the plastid. The protein localises to the chloroplast. The catalysed reaction is RNA(n) + a ribonucleoside 5'-triphosphate = RNA(n+1) + diphosphate. Its function is as follows. DNA-dependent RNA polymerase catalyzes the transcription of DNA into RNA using the four ribonucleoside triphosphates as substrates. This is DNA-directed RNA polymerase subunit alpha from Daucus carota (Wild carrot).